A 356-amino-acid chain; its full sequence is V-type proton ATPase subunit d (356 aa).

This sequence belongs to the V-ATPase V0D/AC39 subunit family. As to quaternary structure, V-ATPase is a heteromultimeric enzyme composed of a peripheral catalytic V1 complex (components A to H) attached to an integral membrane V0 proton pore complex (components: a, c, c', c'' and d).

Subunit of the integral membrane V0 complex of vacuolar ATPase. Vacuolar ATPase is responsible for acidifying a variety of intracellular compartments in eukaryotic cells, thus providing most of the energy required for transport processes in the vacuolar system. The chain is V-type proton ATPase subunit d (vatD-1) from Dictyostelium discoideum (Social amoeba).